The following is a 107-amino-acid chain: uncharacterized protein (107 aa).

2 helical membrane passes run 5–25 (WTII…VINV) and 42–62 (ILVI…VGIF). A compositionally biased stretch (basic and acidic residues) spans 82–92 (IHKQEDTHLAD). The segment at 82–107 (IHKQEDTHLADQTDTQDASAMIEKKD) is disordered.

The protein resides in the cell membrane. This is an uncharacterized protein from Bacillus subtilis (strain 168).